Here is a 113-residue protein sequence, read N- to C-terminus: Ribulose bisphosphate carboxylase small subunit (113 aa).

It belongs to the RuBisCO small chain family. As to quaternary structure, heterohexadecamer of 8 large and 8 small subunits. Forms a CsoS2-CsoS1-RuBisCO complex.

It localises to the carboxysome. Its function is as follows. RuBisCO catalyzes two reactions: the carboxylation of D-ribulose 1,5-bisphosphate, the primary event in carbon dioxide fixation, as well as the oxidative fragmentation of the pentose substrate in the photorespiration process. Both reactions occur simultaneously and in competition at the same active site. Although the small subunit is not catalytic it is essential for maximal activity. This chain is Ribulose bisphosphate carboxylase small subunit, found in Prochlorococcus marinus (strain MIT 9313).